We begin with the raw amino-acid sequence, 70 residues long: Small ribosomal subunit protein bS18c (70 aa).

It belongs to the bacterial ribosomal protein bS18 family. Part of the 30S ribosomal subunit.

Its subcellular location is the plastid. The protein localises to the chloroplast. The chain is Small ribosomal subunit protein bS18c from Gracilaria tenuistipitata var. liui (Red alga).